Reading from the N-terminus, the 213-residue chain is Thymidylate kinase (213 aa).

Residue glycine 10–threonine 17 coordinates ATP.

The protein belongs to the thymidylate kinase family.

The catalysed reaction is dTMP + ATP = dTDP + ADP. Its function is as follows. Phosphorylation of dTMP to form dTDP in both de novo and salvage pathways of dTTP synthesis. The sequence is that of Thymidylate kinase from Escherichia fergusonii (strain ATCC 35469 / DSM 13698 / CCUG 18766 / IAM 14443 / JCM 21226 / LMG 7866 / NBRC 102419 / NCTC 12128 / CDC 0568-73).